The following is a 358-amino-acid chain: GTPase Obg (358 aa).

One can recognise an Obg domain in the interval M1–I159. Positions A160–G327 constitute an OBG-type G domain. Residues G166 to S173, F191 to H195, D212 to G215, N279 to D282, and S308 to V310 each bind GTP. Residues S173 and T193 each coordinate Mg(2+). The segment at A335–P358 is disordered.

This sequence belongs to the TRAFAC class OBG-HflX-like GTPase superfamily. OBG GTPase family. Monomer. The cofactor is Mg(2+).

Its subcellular location is the cytoplasm. Its function is as follows. An essential GTPase which binds GTP, GDP and possibly (p)ppGpp with moderate affinity, with high nucleotide exchange rates and a fairly low GTP hydrolysis rate. Plays a role in control of the cell cycle, stress response, ribosome biogenesis and in those bacteria that undergo differentiation, in morphogenesis control. This chain is GTPase Obg, found in Nitrobacter winogradskyi (strain ATCC 25391 / DSM 10237 / CIP 104748 / NCIMB 11846 / Nb-255).